Here is a 432-residue protein sequence, read N- to C-terminus: Adenylosuccinate synthetase (432 aa).

Residues 13–19 (GDEGKGK) and 41–43 (GHT) contribute to the GTP site. The active-site Proton acceptor is Asp-14. Mg(2+) is bound by residues Asp-14 and Gly-41. IMP contacts are provided by residues 14–17 (DEGK), 39–42 (NAGH), Thr-130, Arg-144, Gln-225, Thr-240, and Arg-304. The active-site Proton donor is His-42. 300–306 (ATTGRSR) contributes to the substrate binding site. GTP-binding positions include Arg-306, 332 to 334 (KLD), and 415 to 417 (STG).

This sequence belongs to the adenylosuccinate synthetase family. In terms of assembly, homodimer. Mg(2+) is required as a cofactor.

It is found in the cytoplasm. It catalyses the reaction IMP + L-aspartate + GTP = N(6)-(1,2-dicarboxyethyl)-AMP + GDP + phosphate + 2 H(+). It functions in the pathway purine metabolism; AMP biosynthesis via de novo pathway; AMP from IMP: step 1/2. Functionally, plays an important role in the de novo pathway of purine nucleotide biosynthesis. Catalyzes the first committed step in the biosynthesis of AMP from IMP. This chain is Adenylosuccinate synthetase, found in Marinomonas sp. (strain MWYL1).